The sequence spans 381 residues: Cytochrome b (381 aa).

A run of 4 helical transmembrane segments spans residues 38-58, 82-103, 118-138, and 183-203; these read FGSL…FLAM, WLLR…YFHI, WMTG…GYVL, and FFTF…IHLL. Residues His-88 and His-102 each coordinate heme b. His-187 and His-201 together coordinate heme b. His-206 contacts a ubiquinone. The next 4 helical transmembrane spans lie at 231 to 251, 293 to 313, 325 to 345, and 352 to 372; these read IKDT…SLTS, LGGV…PFTF, VAQP…WIGA, and YNFL…FTPI.

It belongs to the cytochrome b family. As to quaternary structure, the main subunits of complex b-c1 are: cytochrome b, cytochrome c1 and the Rieske protein. Heme b is required as a cofactor.

It is found in the mitochondrion inner membrane. Its function is as follows. Component of the ubiquinol-cytochrome c reductase complex (complex III or cytochrome b-c1 complex) that is part of the mitochondrial respiratory chain. The b-c1 complex mediates electron transfer from ubiquinol to cytochrome c. Contributes to the generation of a proton gradient across the mitochondrial membrane that is then used for ATP synthesis. The sequence is that of Cytochrome b (MT-CYB) from Artemia franciscana (Brine shrimp).